Consider the following 333-residue polypeptide: NADH-quinone oxidoreductase subunit H (333 aa).

8 consecutive transmembrane segments (helical) span residues 15 to 35 (IALF…FVTY), 88 to 108 (YVLA…VLPF), 117 to 137 (IGVG…GVVA), 165 to 185 (LVMS…VDIV), 191 to 211 (VWFI…AVAE), 241 to 261 (FFML…TILF), 274 to 294 (IPGA…LIWF), and 313 to 333 (VLLP…AWFF).

This sequence belongs to the complex I subunit 1 family. In terms of assembly, NDH-1 is composed of 14 different subunits. Subunits NuoA, H, J, K, L, M, N constitute the membrane sector of the complex.

It is found in the cell membrane. It catalyses the reaction a quinone + NADH + 5 H(+)(in) = a quinol + NAD(+) + 4 H(+)(out). In terms of biological role, NDH-1 shuttles electrons from NADH, via FMN and iron-sulfur (Fe-S) centers, to quinones in the respiratory chain. The immediate electron acceptor for the enzyme in this species is believed to be ubiquinone. Couples the redox reaction to proton translocation (for every two electrons transferred, four hydrogen ions are translocated across the cytoplasmic membrane), and thus conserves the redox energy in a proton gradient. This subunit may bind ubiquinone. This Geobacillus kaustophilus (strain HTA426) protein is NADH-quinone oxidoreductase subunit H.